The primary structure comprises 213 residues: Adenylate kinase (213 aa).

Gly10–Thr15 is a binding site for ATP. Positions Ser30–Val59 are NMP. AMP is bound by residues Thr31, Arg36, Lys57–Val59, Gly83–Arg86, and Gln90. Residues Asn124–Asp161 form an LID region. ATP is bound at residue Arg125. Zn(2+) is bound by residues Cys128 and Cys131. Residue Ser134–Phe135 participates in ATP binding. The Zn(2+) site is built by Cys148 and Asp151. AMP-binding residues include Arg158 and Arg169. Asp197 is a binding site for ATP.

It belongs to the adenylate kinase family. As to quaternary structure, monomer.

It is found in the cytoplasm. It carries out the reaction AMP + ATP = 2 ADP. Its pathway is purine metabolism; AMP biosynthesis via salvage pathway; AMP from ADP: step 1/1. Catalyzes the reversible transfer of the terminal phosphate group between ATP and AMP. Plays an important role in cellular energy homeostasis and in adenine nucleotide metabolism. The chain is Adenylate kinase from Mycoplasma mycoides subsp. mycoides SC (strain CCUG 32753 / NCTC 10114 / PG1).